Here is an 829-residue protein sequence, read N- to C-terminus: Leucine--tRNA ligase (829 aa).

A 'HIGH' region motif is present at residues 34–44 (PYPSGNIHMGH). Residues 591-595 (KMSKS) carry the 'KMSKS' region motif. Lys594 provides a ligand contact to ATP.

Belongs to the class-I aminoacyl-tRNA synthetase family.

It localises to the cytoplasm. The enzyme catalyses tRNA(Leu) + L-leucine + ATP = L-leucyl-tRNA(Leu) + AMP + diphosphate. In Ehrlichia chaffeensis (strain ATCC CRL-10679 / Arkansas), this protein is Leucine--tRNA ligase.